Here is a 373-residue protein sequence, read N- to C-terminus: Protein phosphatase 1K, mitochondrial (373 aa).

The 253-residue stretch at 95-347 folds into the PPM-type phosphatase domain; the sequence is KVGCSTQLGK…DNSTAIVVPF (253 aa). 3 residues coordinate Mg(2+): aspartate 128, glycine 129, and aspartate 338.

Belongs to the PP2C family. It depends on Mg(2+) as a cofactor. Mn(2+) serves as cofactor.

It localises to the mitochondrion matrix. The catalysed reaction is O-phospho-L-seryl-[protein] + H2O = L-seryl-[protein] + phosphate. It catalyses the reaction O-phospho-L-threonyl-[protein] + H2O = L-threonyl-[protein] + phosphate. This chain is Protein phosphatase 1K, mitochondrial (ppm1k), found in Xenopus laevis (African clawed frog).